Here is a 160-residue protein sequence, read N- to C-terminus: Eukaryotic translation initiation factor 5A-2 (160 aa).

Positions 1–12 (MSDEEHHFESKA) are enriched in basic and acidic residues. Positions 1–21 (MSDEEHHFESKADAGASKTFP) are disordered. Residue Lys-52 is modified to Hypusine.

It belongs to the eIF-5A family. In terms of processing, lys-52 undergoes hypusination, a unique post-translational modification that consists in the addition of a butylamino group from spermidine to lysine side chain, leading to the formation of the unusual amino acid hypusine. eIF-5As are the only known proteins to undergo this modification, which is essential for their function.

Functionally, translation factor that promotes translation elongation and termination, particularly upon ribosome stalling at specific amino acid sequence contexts. Binds between the exit (E) and peptidyl (P) site of the ribosome and promotes rescue of stalled ribosome: specifically required for efficient translation of polyproline-containing peptides as well as other motifs that stall the ribosome. Acts as a ribosome quality control (RQC) cofactor by joining the RQC complex to facilitate peptidyl transfer during CAT tailing step. In Solanum lycopersicum (Tomato), this protein is Eukaryotic translation initiation factor 5A-2.